A 93-amino-acid chain; its full sequence is Putative pterin-4-alpha-carbinolamine dehydratase (93 aa).

It belongs to the pterin-4-alpha-carbinolamine dehydratase family.

It catalyses the reaction (4aS,6R)-4a-hydroxy-L-erythro-5,6,7,8-tetrahydrobiopterin = (6R)-L-erythro-6,7-dihydrobiopterin + H2O. The chain is Putative pterin-4-alpha-carbinolamine dehydratase from Sulfurisphaera tokodaii (strain DSM 16993 / JCM 10545 / NBRC 100140 / 7) (Sulfolobus tokodaii).